We begin with the raw amino-acid sequence, 218 residues long: Pyridoxine/pyridoxamine 5'-phosphate oxidase (218 aa).

Substrate contacts are provided by residues 12–15 (RLAY) and R70. FMN is bound by residues 65–70 (RTVLLR), 80–81 (YT), K87, and Q109. Substrate is bound by residues Y127, R131, and S135. Residues 145 to 146 (QS) and W191 contribute to the FMN site. 197-199 (RLH) serves as a coordination point for substrate. R201 contacts FMN.

It belongs to the pyridoxamine 5'-phosphate oxidase family. Homodimer. The cofactor is FMN.

The enzyme catalyses pyridoxamine 5'-phosphate + O2 + H2O = pyridoxal 5'-phosphate + H2O2 + NH4(+). The catalysed reaction is pyridoxine 5'-phosphate + O2 = pyridoxal 5'-phosphate + H2O2. It participates in cofactor metabolism; pyridoxal 5'-phosphate salvage; pyridoxal 5'-phosphate from pyridoxamine 5'-phosphate: step 1/1. Its pathway is cofactor metabolism; pyridoxal 5'-phosphate salvage; pyridoxal 5'-phosphate from pyridoxine 5'-phosphate: step 1/1. Functionally, catalyzes the oxidation of either pyridoxine 5'-phosphate (PNP) or pyridoxamine 5'-phosphate (PMP) into pyridoxal 5'-phosphate (PLP). This Deinococcus geothermalis (strain DSM 11300 / CIP 105573 / AG-3a) protein is Pyridoxine/pyridoxamine 5'-phosphate oxidase.